We begin with the raw amino-acid sequence, 195 residues long: Myosin regulatory light chain, striated muscle, 25 kDa isoform (195 aa).

Over residues 1–17 the composition is skewed to basic and acidic residues; it reads AKDKEKKEKKDKKKDDA. The segment at 1-39 is disordered; sequence AKDKEKKEKKDKKKDDAPAEEAPAAAAAPAEEAAPTPSA. Residues 20 to 39 are compositionally biased toward low complexity; that stretch reads EEAPAAAAAPAEEAAPTPSA. EF-hand domains are found at residues 55 to 90 and 124 to 159; these read NQIQ…IGRE and DTEG…VGDQ. D68, D70, D72, and D79 together coordinate Ca(2+).

Myosin is a hexamer of 2 heavy chains and 4 light chains.

In terms of biological role, plays an important role in regulation of muscle cell contractile activity. This chain is Myosin regulatory light chain, striated muscle, 25 kDa isoform, found in Lumbricus terrestris (Common earthworm).